We begin with the raw amino-acid sequence, 218 residues long: Molybdenum cofactor guanylyltransferase (218 aa).

Residues 16 to 18 (LAG), Lys-28, Asn-56, Asp-74, and Asp-109 each bind GTP. Position 109 (Asp-109) interacts with Mg(2+).

The protein belongs to the MobA family. In terms of assembly, monomer. Requires Mg(2+) as cofactor.

It is found in the cytoplasm. It carries out the reaction Mo-molybdopterin + GTP + H(+) = Mo-molybdopterin guanine dinucleotide + diphosphate. Functionally, transfers a GMP moiety from GTP to Mo-molybdopterin (Mo-MPT) cofactor (Moco or molybdenum cofactor) to form Mo-molybdopterin guanine dinucleotide (Mo-MGD) cofactor. The polypeptide is Molybdenum cofactor guanylyltransferase (Rhizobium meliloti (strain 1021) (Ensifer meliloti)).